We begin with the raw amino-acid sequence, 237 residues long: ATP synthase subunit 4, mitochondrial (237 aa).

The N-terminal 30 residues, 1–30, are a transit peptide targeting the mitochondrion; the sequence is MFRALTLKASARPVVAGLCSRQAPIAAVRY.

The protein belongs to the eukaryotic ATPase B chain family.

It is found in the mitochondrion. The protein localises to the mitochondrion inner membrane. Its function is as follows. Mitochondrial membrane ATP synthase (F(1)F(0) ATP synthase or Complex V) produces ATP from ADP in the presence of a proton gradient across the membrane which is generated by electron transport complexes of the respiratory chain. F-type ATPases consist of two structural domains, F(1) - containing the extramembraneous catalytic core, and F(0) - containing the membrane proton channel, linked together by a central stalk and a peripheral stalk. During catalysis, ATP synthesis in the catalytic domain of F(1) is coupled via a rotary mechanism of the central stalk subunits to proton translocation. Part of the complex F(0) domain and the peripheric stalk, which acts as a stator to hold the catalytic alpha(3)beta(3) subcomplex and subunit a/ATP6 static relative to the rotary elements. This Kluyveromyces lactis (strain ATCC 8585 / CBS 2359 / DSM 70799 / NBRC 1267 / NRRL Y-1140 / WM37) (Yeast) protein is ATP synthase subunit 4, mitochondrial (ATP4).